Here is a 968-residue protein sequence, read N- to C-terminus: RNA polymerase-associated protein RapA (968 aa).

In terms of domain architecture, Helicase ATP-binding spans Asp-164–Asn-334. Residue Asp-177 to Thr-184 coordinates ATP. The short motif at Asp-280–His-283 is the DEAH box element. Positions Arg-490–Gly-662 constitute a Helicase C-terminal domain.

This sequence belongs to the SNF2/RAD54 helicase family. RapA subfamily. Interacts with the RNAP. Has a higher affinity for the core RNAP than for the holoenzyme. Its ATPase activity is stimulated by binding to RNAP.

Its function is as follows. Transcription regulator that activates transcription by stimulating RNA polymerase (RNAP) recycling in case of stress conditions such as supercoiled DNA or high salt concentrations. Probably acts by releasing the RNAP, when it is trapped or immobilized on tightly supercoiled DNA. Does not activate transcription on linear DNA. Probably not involved in DNA repair. This is RNA polymerase-associated protein RapA from Shigella dysenteriae serotype 1 (strain Sd197).